A 272-amino-acid polypeptide reads, in one-letter code: Inositol monophosphatase (272 aa).

Mg(2+) is bound by residues Glu71, Asp90, Ile92, and Asp93. Glu71 is a substrate binding site. Residues 92–95 (IDGT), 194–196 (GTA), Glu213, and Asp220 each bind substrate. Position 220 (Asp220) interacts with Mg(2+).

Belongs to the inositol monophosphatase superfamily. Mg(2+) serves as cofactor.

The protein localises to the cytoplasm. It carries out the reaction a myo-inositol phosphate + H2O = myo-inositol + phosphate. The catalysed reaction is alpha-D-galactose 1-phosphate + H2O = D-galactose + phosphate. It functions in the pathway polyol metabolism; myo-inositol biosynthesis; myo-inositol from D-glucose 6-phosphate: step 2/2. Its activity is regulated as follows. Inhibited by Li(+), Ca(2+) and Mn(2+), but also by Mg(2+) at concentrations above 3 mM. Functionally, responsible for the provision of inositol required for synthesis of phosphatidylinositol and polyphosphoinositides. Has broad substrate specificity and can use myo-inositol monophosphates, myo-inositol 1,3-diphosphate, myo-inositol 1,4-diphosphate, scyllo-inositol-phosphate, D-galactose 1-phosphate, glucose-1-phosphate, glucose-6-phosphate, fructose-1-phosphate, beta-glycerophosphate, and 2'-AMP as substrates. The chain is Inositol monophosphatase (impa1) from Dictyostelium discoideum (Social amoeba).